The following is a 338-amino-acid chain: Lumican (338 aa).

The signal sequence occupies residues 1–18 (MNVCTFTLVLALVGSVSG). Q19 carries the post-translational modification Pyrrolidone carboxylic acid. A sulfotyrosine mark is found at Y20, Y21, Y23, and Y30. The region spanning 28–66 (FMYGELSPNCAPECNCPHSYPTAMYCDDLKLKSVPMVPP) is the LRRNT domain. LRR repeat units lie at residues 67–88 (GIKY…AFEN), 91–114 (DLQW…VFSK), 117–137 (QLKK…PLPK), 138–159 (SLQD…DGLV), 160–181 (NLTF…ASLK), 185–205 (SLEY…GLPT), 206–227 (SLLT…YFNR), and 230–250 (GLQY…PGNS). The N-linked (GlcNAc...) (keratan sulfate) asparagine glycan is linked to N88. N127 carries an N-linked (GlcNAc...) (keratan sulfate) asparagine glycan. N-linked (GlcNAc...) (keratan sulfate) asparagine glycosylation occurs at N160. N-linked (GlcNAc...) (keratan sulfate) asparagine glycosylation is present at N252. LRR repeat units follow at residues 255-276 (SLLE…NENL) and 277-296 (ENYY…SFCK). A disulfide bridge connects residues C295 and C328. S304 carries the post-translational modification Phosphoserine. Residues 305–326 (KIKHLRLDGNPLTQSSLPPDMY) form an LRR 11 repeat.

This sequence belongs to the small leucine-rich proteoglycan (SLRP) family. SLRP class II subfamily. As to quaternary structure, binds to laminin. In terms of processing, contains keratan sulfate.

It localises to the secreted. It is found in the extracellular space. The protein localises to the extracellular matrix. This chain is Lumican (Lum), found in Rattus norvegicus (Rat).